The following is a 385-amino-acid chain: GDP-D-glucose phosphorylase 1 (385 aa).

The active-site Tele-GMP-histidine intermediate is the H218.

The protein belongs to the GDPGP1 family.

It is found in the cytoplasm. It carries out the reaction GDP-alpha-D-glucose + phosphate = alpha-D-glucose 1-phosphate + GDP + H(+). Specific and highly efficient GDP-D-glucose phosphorylase regulating the levels of GDP-D-glucose in cells. In Bos taurus (Bovine), this protein is GDP-D-glucose phosphorylase 1 (GDPGP1).